The primary structure comprises 805 residues: Transitional endoplasmic reticulum ATPase (805 aa).

At serine 3 the chain carries Phosphoserine. ATP contacts are provided by residues proline 247–leucine 253, asparagine 348, histidine 384, and glycine 521–leucine 526. The tract at residues phenylalanine 768 to glycine 805 is disordered. Positions glycine 776 to glycine 793 are enriched in gly residues.

This sequence belongs to the AAA ATPase family. As to quaternary structure, homohexamer. Forms a ring-shaped particle of 12.5 nm diameter, that displays 6-fold radial symmetry. Interacts with the FACT/DUF complex, which includes subunits ssrp1/duf87 and supt16h/duf140. Phosphorylated.

The protein resides in the cytoplasm. It localises to the cytosol. Its subcellular location is the endoplasmic reticulum. The protein localises to the nucleus. It is found in the stress granule. It catalyses the reaction ATP + H2O = ADP + phosphate + H(+). ATPase activity is inhibited or reduced by lowering pH from 9.0 to 7.0, and by addition of Ca(2+), EDTA, KNO(3) or by treatment with N-ethylmaleimide (NEM). Necessary for the fragmentation of Golgi stacks during mitosis and for their reassembly after mitosis. Involved in the formation of the nuclear envelope, and of the transitional endoplasmic reticulum (tER). The transfer of membranes from the endoplasmic reticulum to the Golgi apparatus occurs via 50-70 nm transition vesicles which derive from part-rough, part-smooth transitional elements of the endoplasmic reticulum (tER). Vesicle budding from the tER is an ATP-dependent process. Involved in endoplasmic reticulum stress-induced pre-emptive quality control, a mechanism that selectively attenuates the translocation of newly synthesized proteins into the endoplasmic reticulum and reroutes them to the cytosol for proteasomal degradation. Involved in clearance process by mediating G3BP1 extraction from stress granules. Also involved in DNA damage response: recruited to double-strand breaks (DSBs) sites and promotes the recruitment of tp53bp1 at DNA damage sites. Together with sprtn metalloprotease, involved in the repair of covalent DNA-protein cross-links (DPCs) during DNA synthesis. Involved in interstrand cross-link repair in response to replication stress by mediating unloading of the ubiquitinated CMG helicase complex. Enhances cell cycle progression and inhibits apoptosis at low temperatures. Essential for the maturation of ubiquitin-containing autophagosomes and the clearance of ubiquitinated protein by autophagy. Acts as a negative regulator of type I interferon production by promoting ubiquitination of rigi. May play a role in the ubiquitin-dependent sorting of membrane proteins to lysosomes where they undergo degradation. May more particularly play a role in caveolins sorting in cells. By controlling the steady-state expression of the IGF1R receptor, indirectly regulates the insulin-like growth factor receptor signaling pathway. The protein is Transitional endoplasmic reticulum ATPase of Xenopus tropicalis (Western clawed frog).